Here is a 35-residue protein sequence, read N- to C-terminus: Conotoxin Cl6.16 (35 aa).

3 cysteine pairs are disulfide-bonded: Cys10-Cys22, Cys16-Cys27, and Cys21-Cys34.

As to expression, expressed by the venom duct.

The protein localises to the secreted. The polypeptide is Conotoxin Cl6.16 (Californiconus californicus (California cone)).